The primary structure comprises 942 residues: Serine/threonine-protein kinase ATG1 (942 aa).

The Protein kinase domain occupies 11–312 (YVVEKEIGKG…FEEFFNNKIV (302 aa)). Residues 17–25 (IGKGSFATV) and K41 contribute to the ATP site. The Proton acceptor role is filled by D159. Over residues 435–452 (NSSRVNKLDKSNLSGKSD) the composition is skewed to polar residues. 3 disordered regions span residues 435–454 (NSSR…SDSS), 505–529 (QPHN…SRRA), and 817–836 (NSKP…NDSN). The span at 515-529 (RAPSTTSGGTSSRRA) shows a compositional bias: low complexity. The span at 819 to 834 (KPGTHNQSPKSKISND) shows a compositional bias: polar residues.

Belongs to the protein kinase superfamily. Ser/Thr protein kinase family. APG1/unc-51/ULK1 subfamily. Homodimer. Forms a ternary complex with ATG13 and ATG17.

It localises to the cytoplasm. It is found in the preautophagosomal structure membrane. It catalyses the reaction L-seryl-[protein] + ATP = O-phospho-L-seryl-[protein] + ADP + H(+). It carries out the reaction L-threonyl-[protein] + ATP = O-phospho-L-threonyl-[protein] + ADP + H(+). Its function is as follows. Serine/threonine protein kinase involved in the cytoplasm to vacuole transport (Cvt) and found to be essential in autophagy, where it is required for the formation of autophagosomes. Involved in the clearance of protein aggregates which cannot be efficiently cleared by the proteasome. Required for selective autophagic degradation of the nucleus (nucleophagy) as well as for mitophagy which contributes to regulate mitochondrial quantity and quality by eliminating the mitochondria to a basal level to fulfill cellular energy requirements and preventing excess ROS production. Also involved in endoplasmic reticulum-specific autophagic process, in selective removal of ER-associated degradation (ERAD) substrates. Plays a key role in ATG9 and ATG23 cycling through the pre-autophagosomal structure and is necessary to promote ATG18 binding to ATG9 through phosphorylation of ATG9. Catalyzes phosphorylation of ATG4, decreasing the interaction between ATG4 and ATG8 and impairing deconjugation of PE-conjugated forms of ATG8. Contributes to virulence by conferring resistance to unstable nutrient environments and immune defense of hosts. This is Serine/threonine-protein kinase ATG1 from Candida glabrata (strain ATCC 2001 / BCRC 20586 / JCM 3761 / NBRC 0622 / NRRL Y-65 / CBS 138) (Yeast).